A 274-amino-acid chain; its full sequence is Sulfur carrier protein FdhD (274 aa).

Cys120 serves as the catalytic Cysteine persulfide intermediate.

The protein belongs to the FdhD family.

Its subcellular location is the cytoplasm. In terms of biological role, required for formate dehydrogenase (FDH) activity. Acts as a sulfur carrier protein that transfers sulfur from IscS to the molybdenum cofactor prior to its insertion into FDH. The chain is Sulfur carrier protein FdhD from Burkholderia mallei (strain ATCC 23344).